A 309-amino-acid chain; its full sequence is Elongation factor Ts (309 aa).

Residues 82–85 (TDFV) form an involved in Mg(2+) ion dislocation from EF-Tu region.

It belongs to the EF-Ts family.

The protein resides in the cytoplasm. Associates with the EF-Tu.GDP complex and induces the exchange of GDP to GTP. It remains bound to the aminoacyl-tRNA.EF-Tu.GTP complex up to the GTP hydrolysis stage on the ribosome. The chain is Elongation factor Ts (tsf) from Rickettsia prowazekii (strain Madrid E).